Reading from the N-terminus, the 280-residue chain is Phosphatidylglycerol--prolipoprotein diacylglyceryl transferase (280 aa).

The next 3 helical transmembrane spans lie at 19-39 (LSVR…YFVA), 56-76 (IIFY…VIFQ), and 90-110 (IWHG…AGVI). Arginine 138 contributes to the a 1,2-diacyl-sn-glycero-3-phospho-(1'-sn-glycerol) binding site. The next 2 helical transmembrane spans lie at 204-224 (LGET…FIEG) and 236-256 (IRVA…LIVY).

The protein belongs to the Lgt family.

It is found in the cell membrane. The enzyme catalyses L-cysteinyl-[prolipoprotein] + a 1,2-diacyl-sn-glycero-3-phospho-(1'-sn-glycerol) = an S-1,2-diacyl-sn-glyceryl-L-cysteinyl-[prolipoprotein] + sn-glycerol 1-phosphate + H(+). Its pathway is protein modification; lipoprotein biosynthesis (diacylglyceryl transfer). In terms of biological role, catalyzes the transfer of the diacylglyceryl group from phosphatidylglycerol to the sulfhydryl group of the N-terminal cysteine of a prolipoprotein, the first step in the formation of mature lipoproteins. The protein is Phosphatidylglycerol--prolipoprotein diacylglyceryl transferase of Staphylococcus aureus (strain MRSA252).